Reading from the N-terminus, the 245-residue chain is Probable transcriptional regulatory protein MAG6590 (245 aa).

It belongs to the TACO1 family.

The protein resides in the cytoplasm. This chain is Probable transcriptional regulatory protein MAG6590, found in Mycoplasmopsis agalactiae (strain NCTC 10123 / CIP 59.7 / PG2) (Mycoplasma agalactiae).